Reading from the N-terminus, the 116-residue chain is Somatostatin (116 aa).

An N-terminal signal peptide occupies residues 1–24; sequence MLSCRLQCALAALCIVLALGGVTG. The propeptide occupies 35 to 88; it reads LQKSLAAATGKQELAKYFLAELLSEPNQTENDALEPEDLPQAAEQDEMRLELQR. Threonine amide is present on T43. A disulfide bridge links C105 with C116.

Belongs to the somatostatin family. In terms of processing, C-terminal amidation of the neuronostatin peptide is required for its biological activity, including for the regulation of mean arterial pressure. In the pancreas, somatostatin is expressed in delta cells of the islets of Langerhans. In the stomach, it is expressed in parietal cells of oxyntic mucosa and in the small intestine, it is found in the villus (at protein level). Neuronostatin is expressed in the pancreas in delta cells of the islets of Langerhans, as well as in the stomach, in parietal cells of oxyntic mucosa and in the small intestine, in the villus (at protein level).

Its subcellular location is the secreted. Inhibits the secretion of pituitary hormones, including that of growth hormone/somatotropin (GH1), PRL, ACTH, luteinizing hormone (LH) and TSH. Also impairs ghrelin- and GnRH-stimulated secretion of GH1 and LH; the inhibition of ghrelin-stimulated secretion of GH1 can be further increased by neuronostatin. In terms of biological role, may enhance low-glucose-induced glucagon release by pancreatic alpha cells. This effect may be mediated by binding to GPR107 and PKA activation. May regulate cardiac contractile function. May compromise cardiomyocyte viability. In the central nervous system, may impair memory retention and may affect hippocampal excitability. May also have anxiolytic and anorexigenic effects. May play a role in arterial pressure regulation. May inhibit basal, but not ghrelin- or GnRH-stimulated secretion of GH1 or LH, but does not affect the release of other pituitary hormones, including PRL, ACTH, FSH or TSH. Potentiates inhibitory action of somatostatin on ghrelin-stimulated secretion of GH1, but not that on GnRH-stimulated secretion of LH. This Mus musculus (Mouse) protein is Somatostatin (Sst).